We begin with the raw amino-acid sequence, 163 residues long: UPF0763 protein JJD26997_0796 (163 aa).

It belongs to the UPF0763 family.

The chain is UPF0763 protein JJD26997_0796 from Campylobacter jejuni subsp. doylei (strain ATCC BAA-1458 / RM4099 / 269.97).